The primary structure comprises 331 residues: Beta-ketoacyl-[acyl-carrier-protein] synthase III (331 aa).

Catalysis depends on residues Cys113 and His256. The interval Gln257–Arg261 is ACP-binding. Asn286 is a catalytic residue.

The protein belongs to the thiolase-like superfamily. FabH family. In terms of assembly, homodimer.

Its subcellular location is the cytoplasm. The enzyme catalyses malonyl-[ACP] + acetyl-CoA + H(+) = 3-oxobutanoyl-[ACP] + CO2 + CoA. The protein operates within lipid metabolism; fatty acid biosynthesis. In terms of biological role, catalyzes the condensation reaction of fatty acid synthesis by the addition to an acyl acceptor of two carbons from malonyl-ACP. Catalyzes the first condensation reaction which initiates fatty acid synthesis and may therefore play a role in governing the total rate of fatty acid production. Possesses both acetoacetyl-ACP synthase and acetyl transacylase activities. Its substrate specificity determines the biosynthesis of branched-chain and/or straight-chain of fatty acids. The chain is Beta-ketoacyl-[acyl-carrier-protein] synthase III from Solibacter usitatus (strain Ellin6076).